We begin with the raw amino-acid sequence, 882 residues long: Homeobox-leucine zipper protein ROC3 (882 aa).

The tract at residues 104–144 (DVDDDHKPQHSGHDQPPDAAQPSGAAGGNAKKKRYHRHTAH) is disordered. A compositionally biased stretch (basic and acidic residues) spans 107–119 (DDHKPQHSGHDQP). The span at 133 to 143 (AKKKRYHRHTA) shows a compositional bias: basic residues. The homeobox DNA-binding region spans 134 to 193 (KKKRYHRHTAHQIQQMEALFKECPHPDDKQRLKLSQELGLKPRQVKFWFQNRRTQMKAQQ). Residues 200–263 (ILRAENENLK…LDRLACIATR (64 aa)) adopt a coiled-coil conformation. The region spanning 340-584 (QEQDKQLVVD…LQRQCERLAS (245 aa)) is the START domain. The segment covering 782 to 816 (AAAPTISSSTTTTTGNGNGETSSTPPRNSSSNNNN) has biased composition (low complexity). Residues 782–820 (AAAPTISSSTTTTTGNGNGETSSTPPRNSSSNNNNADEL) form a disordered region.

Belongs to the HD-ZIP homeobox family. Class IV subfamily.

It is found in the nucleus. In terms of biological role, probable transcription factor. This chain is Homeobox-leucine zipper protein ROC3 (ROC3), found in Oryza sativa subsp. japonica (Rice).